Here is a 443-residue protein sequence, read N- to C-terminus: Tol-Pal system protein TolB (443 aa).

The N-terminal stretch at 1–33 (MKIGIINTKIRTVFSAFACMIAASLVCTMPARA) is a signal peptide.

It belongs to the TolB family. The Tol-Pal system is composed of five core proteins: the inner membrane proteins TolA, TolQ and TolR, the periplasmic protein TolB and the outer membrane protein Pal. They form a network linking the inner and outer membranes and the peptidoglycan layer.

The protein localises to the periplasm. Functionally, part of the Tol-Pal system, which plays a role in outer membrane invagination during cell division and is important for maintaining outer membrane integrity. The sequence is that of Tol-Pal system protein TolB from Brucella melitensis biotype 1 (strain ATCC 23456 / CCUG 17765 / NCTC 10094 / 16M).